Consider the following 498-residue polypeptide: ATP synthase subunit beta, chloroplastic (498 aa).

Position 172–179 (172–179 (GGAGVGKT)) interacts with ATP.

Belongs to the ATPase alpha/beta chains family. F-type ATPases have 2 components, CF(1) - the catalytic core - and CF(0) - the membrane proton channel. CF(1) has five subunits: alpha(3), beta(3), gamma(1), delta(1), epsilon(1). CF(0) has four main subunits: a(1), b(1), b'(1) and c(9-12).

The protein resides in the plastid. It is found in the chloroplast thylakoid membrane. It carries out the reaction ATP + H2O + 4 H(+)(in) = ADP + phosphate + 5 H(+)(out). Its function is as follows. Produces ATP from ADP in the presence of a proton gradient across the membrane. The catalytic sites are hosted primarily by the beta subunits. The chain is ATP synthase subunit beta, chloroplastic from Phoenix dactylifera (Date palm).